Here is a 110-residue protein sequence, read N- to C-terminus: MASHFLFTGKPWLQEKTPRLHLHPTWDLKASKSLARFPYTPLESLLAPISAFHPTYLNSAAPSKAQSHPVLLAAGVGGIVVRCPSRKPIYRTTRIQYLLLISHFTTALFK.

This is an uncharacterized protein from Schizosaccharomyces pombe (strain 972 / ATCC 24843) (Fission yeast).